A 196-amino-acid chain; its full sequence is tRNA (pseudouridine(54)-N(1))-methyltransferase (196 aa).

Leucine 126 provides a ligand contact to S-adenosyl-L-methionine.

This sequence belongs to the methyltransferase superfamily. TrmY family. Homodimer.

It is found in the cytoplasm. The enzyme catalyses pseudouridine(54) in tRNA + S-adenosyl-L-methionine = N(1)-methylpseudouridine(54) in tRNA + S-adenosyl-L-homocysteine + H(+). Specifically catalyzes the N1-methylation of pseudouridine at position 54 (Psi54) in tRNAs. This is tRNA (pseudouridine(54)-N(1))-methyltransferase from Halobacterium salinarum (strain ATCC 700922 / JCM 11081 / NRC-1) (Halobacterium halobium).